A 521-amino-acid polypeptide reads, in one-letter code: Bifunctional purine biosynthesis protein PurH (521 aa).

An MGS-like domain is found at 1–145 (MIKQALISVS…KNHRDVTVVV (145 aa)).

The protein belongs to the PurH family.

It carries out the reaction (6R)-10-formyltetrahydrofolate + 5-amino-1-(5-phospho-beta-D-ribosyl)imidazole-4-carboxamide = 5-formamido-1-(5-phospho-D-ribosyl)imidazole-4-carboxamide + (6S)-5,6,7,8-tetrahydrofolate. The enzyme catalyses IMP + H2O = 5-formamido-1-(5-phospho-D-ribosyl)imidazole-4-carboxamide. It participates in purine metabolism; IMP biosynthesis via de novo pathway; 5-formamido-1-(5-phospho-D-ribosyl)imidazole-4-carboxamide from 5-amino-1-(5-phospho-D-ribosyl)imidazole-4-carboxamide (10-formyl THF route): step 1/1. Its pathway is purine metabolism; IMP biosynthesis via de novo pathway; IMP from 5-formamido-1-(5-phospho-D-ribosyl)imidazole-4-carboxamide: step 1/1. The sequence is that of Bifunctional purine biosynthesis protein PurH from Paraburkholderia phymatum (strain DSM 17167 / CIP 108236 / LMG 21445 / STM815) (Burkholderia phymatum).